The chain runs to 191 residues: Cell division protein SepF (191 aa).

Positions 151-165 are enriched in low complexity; sequence SSSPEEASPSSVPTE. The disordered stretch occupies residues 151–191; the sequence is SSSPEEASPSSVPTENTPQYSLGKNTTPEPAWGNSKLSAYS. Residues 166 to 178 show a composition bias toward polar residues; it reads NTPQYSLGKNTTP.

The protein belongs to the SepF family. Homodimer. Interacts with FtsZ.

It localises to the cytoplasm. Cell division protein that is part of the divisome complex and is recruited early to the Z-ring. Probably stimulates Z-ring formation, perhaps through the cross-linking of FtsZ protofilaments. Its function overlaps with FtsA. This chain is Cell division protein SepF, found in Prochlorococcus marinus (strain MIT 9215).